We begin with the raw amino-acid sequence, 314 residues long: uncharacterized protein (314 aa).

The interval 1–71 (MAGNSQRRGA…QRAGRKADET (71 aa)) is disordered. 3 residues coordinate S-adenosyl-L-methionine: glycine 266, isoleucine 286, and leucine 295.

The protein belongs to the class IV-like SAM-binding methyltransferase superfamily. RNA methyltransferase TrmH family.

This is an uncharacterized protein from Mycolicibacterium smegmatis (strain ATCC 700084 / mc(2)155) (Mycobacterium smegmatis).